We begin with the raw amino-acid sequence, 127 residues long: Protein ApaG (127 aa).

The region spanning 3-127 (NDQKYDIKVQ…FILSVPRVLH (125 aa)) is the ApaG domain.

The sequence is that of Protein ApaG from Nitrosomonas eutropha (strain DSM 101675 / C91 / Nm57).